A 680-amino-acid polypeptide reads, in one-letter code: Methionine--tRNA ligase (680 aa).

The short motif at 14–24 is the 'HIGH' region element; it reads PYANGPIHLGH. Zn(2+) contacts are provided by C145, C148, C158, and C161. A 'KMSKS' region motif is present at residues 330-334; it reads KMSKS. Position 333 (K333) interacts with ATP. The tRNA-binding domain maps to 579–680; that stretch reads DFAKVDFRIA…DGAQPGMRVK (102 aa).

Belongs to the class-I aminoacyl-tRNA synthetase family. MetG type 1 subfamily. In terms of assembly, homodimer. Zn(2+) serves as cofactor.

Its subcellular location is the cytoplasm. The enzyme catalyses tRNA(Met) + L-methionine + ATP = L-methionyl-tRNA(Met) + AMP + diphosphate. Functionally, is required not only for elongation of protein synthesis but also for the initiation of all mRNA translation through initiator tRNA(fMet) aminoacylation. The sequence is that of Methionine--tRNA ligase from Hydrogenovibrio crunogenus (strain DSM 25203 / XCL-2) (Thiomicrospira crunogena).